We begin with the raw amino-acid sequence, 248 residues long: 3-deoxy-manno-octulosonate cytidylyltransferase (248 aa).

It belongs to the KdsB family.

Its subcellular location is the cytoplasm. It catalyses the reaction 3-deoxy-alpha-D-manno-oct-2-ulosonate + CTP = CMP-3-deoxy-beta-D-manno-octulosonate + diphosphate. It participates in nucleotide-sugar biosynthesis; CMP-3-deoxy-D-manno-octulosonate biosynthesis; CMP-3-deoxy-D-manno-octulosonate from 3-deoxy-D-manno-octulosonate and CTP: step 1/1. The protein operates within bacterial outer membrane biogenesis; lipopolysaccharide biosynthesis. Activates KDO (a required 8-carbon sugar) for incorporation into bacterial lipopolysaccharide in Gram-negative bacteria. The chain is 3-deoxy-manno-octulosonate cytidylyltransferase from Citrobacter koseri (strain ATCC BAA-895 / CDC 4225-83 / SGSC4696).